The following is a 393-amino-acid chain: S-adenosylmethionine synthase (393 aa).

E10 contributes to the Mg(2+) binding site. H16 serves as a coordination point for ATP. E44 contributes to the K(+) binding site. The L-methionine site is built by E57 and Q100. Residues 168–170, 236–239, D247, 253–254, A270, K274, and K278 each bind ATP; these read DGK, SGRF, and RK. D247 is an L-methionine binding site. K278 serves as a coordination point for L-methionine.

The protein belongs to the AdoMet synthase family. In terms of assembly, homotetramer. Requires Mn(2+) as cofactor. The cofactor is Mg(2+). Co(2+) is required as a cofactor. K(+) serves as cofactor.

Its subcellular location is the cytoplasm. It carries out the reaction L-methionine + ATP + H2O = S-adenosyl-L-methionine + phosphate + diphosphate. It functions in the pathway amino-acid biosynthesis; S-adenosyl-L-methionine biosynthesis; S-adenosyl-L-methionine from L-methionine: step 1/1. Functionally, catalyzes the formation of S-adenosylmethionine from methionine and ATP. The reaction comprises two steps that are both catalyzed by the same enzyme: formation of S-adenosylmethionine (AdoMet) and triphosphate, and subsequent hydrolysis of the triphosphate. The sequence is that of S-adenosylmethionine synthase (METK) from Musa acuminata (Banana).